The primary structure comprises 270 residues: Phosphatidylglycerol--prolipoprotein diacylglyceryl transferase (270 aa).

4 consecutive transmembrane segments (helical) span residues 18–38 (IAVH…LWLA), 55–75 (LVLF…VIFQ), 89–109 (IWNG…TGII), and 115–135 (GLSF…GQAI). Arg-137 provides a ligand contact to a 1,2-diacyl-sn-glycero-3-phospho-(1'-sn-glycerol). 3 helical membrane passes run 177–197 (QPTF…LLLL), 205–225 (GELF…IEGL), and 236–256 (LRIA…LIAY).

It belongs to the Lgt family.

It localises to the cell membrane. The catalysed reaction is L-cysteinyl-[prolipoprotein] + a 1,2-diacyl-sn-glycero-3-phospho-(1'-sn-glycerol) = an S-1,2-diacyl-sn-glyceryl-L-cysteinyl-[prolipoprotein] + sn-glycerol 1-phosphate + H(+). Its pathway is protein modification; lipoprotein biosynthesis (diacylglyceryl transfer). Functionally, catalyzes the transfer of the diacylglyceryl group from phosphatidylglycerol to the sulfhydryl group of the N-terminal cysteine of a prolipoprotein, the first step in the formation of mature lipoproteins. This is Phosphatidylglycerol--prolipoprotein diacylglyceryl transferase from Bacillus licheniformis (strain ATCC 14580 / DSM 13 / JCM 2505 / CCUG 7422 / NBRC 12200 / NCIMB 9375 / NCTC 10341 / NRRL NRS-1264 / Gibson 46).